The chain runs to 386 residues: Methionine import ATP-binding protein MetN 2 (386 aa).

One can recognise an ABC transporter domain in the interval 32–272 (VIFDDVGKVF…PQHDATRALL (241 aa)). 69 to 76 (GRSGAGKS) is a binding site for ATP.

This sequence belongs to the ABC transporter superfamily. Methionine importer (TC 3.A.1.24) family. In terms of assembly, the complex is composed of two ATP-binding proteins (MetN), two transmembrane proteins (MetI) and a solute-binding protein (MetQ).

The protein localises to the cell inner membrane. The enzyme catalyses L-methionine(out) + ATP + H2O = L-methionine(in) + ADP + phosphate + H(+). The catalysed reaction is D-methionine(out) + ATP + H2O = D-methionine(in) + ADP + phosphate + H(+). Part of the ABC transporter complex MetNIQ involved in methionine import. Responsible for energy coupling to the transport system. This Paraburkholderia xenovorans (strain LB400) protein is Methionine import ATP-binding protein MetN 2.